The following is a 168-amino-acid chain: Type-2 ice-structuring protein (168 aa).

The first 17 residues, 1 to 17 (MLTVSLLVCAMMALTQA), serve as a signal peptide directing secretion. Positions 18–34 (DHDGVLKGTATEAGEVS) are excised as a propeptide. 5 disulfide bridges follow: Cys45/Cys56, Cys73/Cys163, Cys107/Cys138, Cys127/Cys149, and Cys139/Cys155. The 113-residue stretch at 52-164 (HGQRCFYSEA…CPASHASICA (113 aa)) folds into the C-type lectin domain.

Its subcellular location is the secreted. Its function is as follows. Has antifreeze activity to protect fish blood from freezing at subzero sea water temperatures. Binds to ice crystals and inhibits their growth. The thermal hysteresis (TH) activity, the ability to lower the blood freezing point, is approximately 0.45 degrees Celsius at 0.15 mM for this protein. This Brachyopsis segaliensis (Sea poacher) protein is Type-2 ice-structuring protein.